Reading from the N-terminus, the 320-residue chain is Malate dehydrogenase (320 aa).

NAD(+)-binding positions include 10-15 (GAGQIG) and Asp-34. Arg-83 and Arg-89 together coordinate substrate. NAD(+) contacts are provided by residues Asn-96 and 119 to 121 (ITN). Residues Asn-121 and Arg-152 each coordinate substrate. Catalysis depends on His-176, which acts as the Proton acceptor.

The protein belongs to the LDH/MDH superfamily. MDH type 3 family.

The catalysed reaction is (S)-malate + NAD(+) = oxaloacetate + NADH + H(+). Its function is as follows. Catalyzes the reversible oxidation of malate to oxaloacetate. This chain is Malate dehydrogenase, found in Methylobacterium sp. (strain 4-46).